The primary structure comprises 375 residues: Deoxyribonuclease-2 (375 aa).

An N-terminal signal peptide occupies residues 1-21; it reads MGLSPAAVLIFLLLGVSQTYA. A glycan (N-linked (GlcNAc...) asparagine) is linked at N131.

This sequence belongs to the DNase II family.

It carries out the reaction Endonucleolytic cleavage to nucleoside 3'-phosphates and 3'-phosphooligonucleotide end-products.. Functionally, hydrolyzes DNA under acidic conditions with a preference for double-stranded DNA. Implicated in apoptosis. The chain is Deoxyribonuclease-2 (nuc-1) from Caenorhabditis elegans.